A 211-amino-acid chain; its full sequence is Endonuclease V (211 aa).

Mg(2+)-binding residues include Asp37 and Asp102.

This sequence belongs to the endonuclease V family. Requires Mg(2+) as cofactor.

The protein resides in the cytoplasm. The catalysed reaction is Endonucleolytic cleavage at apurinic or apyrimidinic sites to products with a 5'-phosphate.. Its function is as follows. DNA repair enzyme involved in the repair of deaminated bases. Selectively cleaves double-stranded DNA at the second phosphodiester bond 3' to a deoxyinosine leaving behind the intact lesion on the nicked DNA. This is Endonuclease V from Ignicoccus hospitalis (strain KIN4/I / DSM 18386 / JCM 14125).